The following is a 291-amino-acid chain: N-acetylmannosamine kinase (291 aa).

ATP contacts are provided by residues Ala-5 to Lys-12 and Gly-132 to Ser-139. Zn(2+) is bound by residues His-156, Cys-166, Cys-168, and Cys-173.

It belongs to the ROK (NagC/XylR) family. NanK subfamily. As to quaternary structure, homodimer.

The catalysed reaction is an N-acyl-D-mannosamine + ATP = an N-acyl-D-mannosamine 6-phosphate + ADP + H(+). The protein operates within amino-sugar metabolism; N-acetylneuraminate degradation; D-fructose 6-phosphate from N-acetylneuraminate: step 2/5. Its function is as follows. Catalyzes the phosphorylation of N-acetylmannosamine (ManNAc) to ManNAc-6-P. This Escherichia coli (strain K12 / MC4100 / BW2952) protein is N-acetylmannosamine kinase.